Here is a 638-residue protein sequence, read N- to C-terminus: MSDKDSKNTPQVPEKLGLSRRGFLGASAVTGAAVAATALGGAVMTRESWAQAVKESKQKIHVGPGELDDYYGFWSGGHQGEVRVLGVPSMRELMRIPVFNVDSATGWGLTNESRHIMGDSAKFLNGDCHHPHISMTDGKYDGKYLFINDKANSRVARIRLDIMKCDKMITVPNVQAIHGLRLQKVPHTKYVFANAEFIIPHPNDGKVFDLQDENSYTMYNAIDAETMEMAFQVIVDGNLDNTDADYTGRFAAATCYNSEKAFDLGGMMRNERDWVVVFDIHAVEAAVKAGDFITLGDSKTPVLDGRKKDGKDSKFTRYVPVPKNPHGCNTSSDGKYFIAAGKLSPTCSMIAIDKLPDLFAGKLADPRDVIVGEPELGLGPLHTTFDGRGNAYTTLFIDSQVVKWNMEEAVRAYKGEKVNYIKQKLDVHYQPGHLHASLCETNEADGKWLVALSKFSKDRFLPVGPLHPENDQLIDISGDEMKLVHDGPTFAEPHDCIMARRDQIKTKKIWDRNDPFFAPTVEMAKKDGINLDTDNKVIRDGNKVRVYMTSMAPAFGVQEFTVKQGDEVTVTITNIDQIEDVSHGFVVVNHGVSMEISPQQTSSITFVADKPGLHWYYCSWFCHALHMEMVGRMMVEPA.

Residues 1-52 (MSDKDSKNTPQVPEKLGLSRRGFLGASAVTGAAVAATALGGAVMTRESWAQA) constitute a signal peptide (tat-type signal). Cu cation contacts are provided by His-129, His-130, and His-178. Ca(2+) contacts are provided by Tyr-256, Glu-259, Met-267, Asp-273, and Asn-324. Cu cation contacts are provided by His-326, His-382, and His-433. 2 residues coordinate Ca(2+): Lys-454 and Glu-469. His-494, His-583, Cys-618, Trp-620, Cys-622, His-626, and Met-629 together coordinate Cu cation. Residues 542-638 (NKVRVYMTSM…MVGRMMVEPA (97 aa)) are COX2-like.

It belongs to the NosZ family. The protein in the C-terminal section; belongs to the cytochrome c oxidase subunit 2 family. In terms of assembly, homodimer. Ca(2+) serves as cofactor. Cu cation is required as a cofactor. In terms of processing, predicted to be exported by the Tat system. The position of the signal peptide cleavage has not been experimentally proven. The N-terminus is blocked.

It localises to the periplasm. It carries out the reaction N2 + 2 Fe(III)-[cytochrome c] + H2O = nitrous oxide + 2 Fe(II)-[cytochrome c] + 2 H(+). The protein operates within nitrogen metabolism; nitrate reduction (denitrification); dinitrogen from nitrate: step 4/4. Functionally, nitrous-oxide reductase is part of a bacterial respiratory system which is activated under anaerobic conditions in the presence of nitrate or nitrous oxide. In Stutzerimonas stutzeri (Pseudomonas stutzeri), this protein is Nitrous-oxide reductase (nosZ).